Consider the following 336-residue polypeptide: Anthranilate phosphoribosyltransferase (336 aa).

Residues glycine 82, 85–86 (GD), threonine 90, 92–95 (NIST), 110–118 (KHGNRSVSS), and serine 122 contribute to the 5-phospho-alpha-D-ribose 1-diphosphate site. Glycine 82 provides a ligand contact to anthranilate. Serine 94 serves as a coordination point for Mg(2+). Asparagine 113 provides a ligand contact to anthranilate. Arginine 168 contributes to the anthranilate binding site. The Mg(2+) site is built by aspartate 227 and glutamate 228.

Belongs to the anthranilate phosphoribosyltransferase family. In terms of assembly, homodimer. The cofactor is Mg(2+).

It carries out the reaction N-(5-phospho-beta-D-ribosyl)anthranilate + diphosphate = 5-phospho-alpha-D-ribose 1-diphosphate + anthranilate. Its pathway is amino-acid biosynthesis; L-tryptophan biosynthesis; L-tryptophan from chorismate: step 2/5. Catalyzes the transfer of the phosphoribosyl group of 5-phosphorylribose-1-pyrophosphate (PRPP) to anthranilate to yield N-(5'-phosphoribosyl)-anthranilate (PRA). The polypeptide is Anthranilate phosphoribosyltransferase (Leptospira interrogans serogroup Icterohaemorrhagiae serovar Lai (strain 56601)).